The primary structure comprises 1013 residues: Sodium/potassium-transporting ATPase subunit alpha-3 (1013 aa).

Positions 1–10 (MGDKKDDKSS) are enriched in basic and acidic residues. Residues 1-24 (MGDKKDDKSSPKKSKAKERRDLDD) are disordered. At 1–77 (MGDKKDDKSS…NALTPPPTTP (77 aa)) the chain is on the cytoplasmic side. Residues Ser-37 and Ser-56 each carry the phosphoserine modification. The interaction with phosphoinositide-3 kinase stretch occupies residues 72 to 74 (PPP). Residues 78–98 (EWVKFCRQLFGGFSILLWIGA) traverse the membrane as a helical segment. Residues 99–121 (ILCFLAYGIQAGTEDDPSGDNLY) are Extracellular-facing. Residues 122 to 142 (LGIVLAAVVIITGCFSYYQEA) form a helical membrane-spanning segment. Residues 143–278 (KSSKIMESFK…VGKTPIAIEI (136 aa)) lie on the Cytoplasmic side of the membrane. 2 positions are modified to phosphoserine: Ser-218 and Ser-265. A helical transmembrane segment spans residues 279–298 (EHFIQLITGVAVFLGVSFFI). Residues 299-310 (LSLILGYTWLEA) lie on the Extracellular side of the membrane. The chain crosses the membrane as a helical span at residues 311-328 (VIFLIGIIVANVPEGLLA). The Cytoplasmic portion of the chain corresponds to 329-762 (TVTVCLTLTA…EEGRLIFDNL (434 aa)). Catalysis depends on Asp-366, which acts as the 4-aspartylphosphate intermediate. The residue at position 442 (Ser-442) is a Phosphoserine. Phosphotyrosine is present on Tyr-548. Mg(2+) contacts are provided by Asp-707 and Asp-711. The helical transmembrane segment at 763–782 (KKSIAYTLTSNIPEITPFLL) threads the bilayer. At 783–792 (FIMANIPLPL) the chain is on the extracellular side. A helical membrane pass occupies residues 793-813 (GTITILCIDLGTDMVPAISLA). Residues 814–833 (YEAAESDIMKRQPRNPRTDK) lie on the Cytoplasmic side of the membrane. A helical transmembrane segment spans residues 834 to 856 (LVNERLISMAYGQIGMIQALGGF). Over 857-908 (FSYFVILAENGFLPGNLVGIRLNWDDRTVNDLEDSYGQQWTYEQRKVVEFTC) the chain is Extracellular. A helical transmembrane segment spans residues 909–928 (HTAFFVSIVVVQWADLIICK). Topologically, residues 929-941 (TRRNSVFQQGMKN) are cytoplasmic. Ser-933 is modified (phosphoserine; by PKA). A helical transmembrane segment spans residues 942–960 (KILIFGLFEETALAAFLSY). The Extracellular portion of the chain corresponds to 961–975 (CPGMDVALRMYPLKP). Residues 976 to 996 (SWWFCAFPYSFLIFVYDEIRK) traverse the membrane as a helical segment. Over 997–1013 (LILRRNPGGWVEKETYY) the chain is Cytoplasmic.

The protein belongs to the cation transport ATPase (P-type) (TC 3.A.3) family. Type IIC subfamily. In terms of assembly, the sodium/potassium-transporting ATPase is composed of a catalytic alpha subunit, an auxiliary non-catalytic beta subunit and an additional regulatory subunit. Interacts with regulatory subunit FXYD1.

It is found in the cell membrane. It catalyses the reaction K(+)(out) + Na(+)(in) + ATP + H2O = K(+)(in) + Na(+)(out) + ADP + phosphate + H(+). Functionally, this is the catalytic component of the active enzyme, which catalyzes the hydrolysis of ATP coupled with the exchange of sodium and potassium ions across the plasma membrane. This action creates the electrochemical gradient of sodium and potassium ions, providing the energy for active transport of various nutrients. The protein is Sodium/potassium-transporting ATPase subunit alpha-3 (Atp1a3) of Mus musculus (Mouse).